Reading from the N-terminus, the 406-residue chain is Kelch domain-containing protein 1 (406 aa).

Kelch repeat units follow at residues 24 to 76, 80 to 134, 135 to 181, 208 to 258, 260 to 307, and 311 to 361; these read FLYV…CGAC, KLYI…VYKD, RLIY…TKTQ, KGYI…PIAD, KLFL…ACLG, and EIMV…LESQ.

As to quaternary structure, component of a CRL5 E3 ubiquitin-protein ligase complex, also named ECS (Elongin BC-CUL2/5-SOCS-box protein) complex, composed of CUL5, Elongin BC (ELOB and ELOC), RBX1 and substrate-specific adapter KLHDC1. As to expression, widely expressed, with high levels in skeletal muscle, pancreas and liver. Undetectable in peripheral blood leukocytes.

The protein localises to the cytoplasm. It is found in the cytosol. It participates in protein modification; protein ubiquitination. Functionally, substrate-recognition component of a Cul5-RING (CRL5) E3 ubiquitin-protein ligase complex of the DesCEND (destruction via C-end degrons) pathway, which recognizes a C-degron located at the extreme C terminus of target proteins, leading to their ubiquitination and degradation. The C-degron recognized by the DesCEND pathway is usually a motif of less than ten residues and can be present in full-length proteins, truncated proteins or proteolytically cleaved forms. The CRL5(KLHDC1) complex mediates ubiquitination and degradation of truncated SELENOS selenoprotein produced by failed UGA/Sec decoding, which ends with a glycine. The polypeptide is Kelch domain-containing protein 1 (Homo sapiens (Human)).